A 66-amino-acid chain; its full sequence is Defensin-like peptide 2/4 (66 aa).

A signal peptide spans 1–22 (MRLAYLLLLLVAVLFQAGGGSA). Positions 23-24 (KP) are excised as a propeptide. A D-methionine; in form DLP-2 modification is found at methionine 26. 3 cysteine pairs are disulfide-bonded: cysteine 33–cysteine 63, cysteine 40–cysteine 56, and cysteine 48–cysteine 64.

Post-translationally, stereoinversion of L-Met-26 (in DLP-4) to D-Met-26 (in DLP-2). As to expression, produced by the crural gland and detected in venom from the spur located on each male hind leg. Is also widely expressed in both male and female tissues, including brain, intestine, kidney, lung, spleen and testis.

The protein resides in the secreted. Functionally, does not show antimicrobial, myotoxic, hemolytic and cell-promoting activities. The chain is Defensin-like peptide 2/4 from Ornithorhynchus anatinus (Duckbill platypus).